The following is a 258-amino-acid chain: Diacetyl reductase [(S)-acetoin forming] (258 aa).

8 to 32 is a binding site for NAD(+); that stretch reads LVTGGAQGIGFKIAERLVEDGFKVA. S141 lines the substrate pocket. Catalysis depends on Y154, which acts as the Proton acceptor. K158 is an active-site residue.

It belongs to the short-chain dehydrogenases/reductases (SDR) family.

It catalyses the reaction (S)-acetoin + NAD(+) = diacetyl + NADH + H(+). Its function is as follows. Catalyzes the irreversible reduction of 2,3-butanediol to (S)-acetoin in the presence of NADH. The protein is Diacetyl reductase [(S)-acetoin forming] (butA) of Staphylococcus aureus (strain Mu50 / ATCC 700699).